Reading from the N-terminus, the 227-residue chain is UPF0758 protein CPF_2399 (227 aa).

An MPN domain is found at lysine 105–leucine 227. Residues histidine 176, histidine 178, and aspartate 189 each coordinate Zn(2+). The short motif at histidine 176 to aspartate 189 is the JAMM motif element.

It belongs to the UPF0758 family.

This chain is UPF0758 protein CPF_2399, found in Clostridium perfringens (strain ATCC 13124 / DSM 756 / JCM 1290 / NCIMB 6125 / NCTC 8237 / Type A).